Consider the following 75-residue polypeptide: Movement protein TGBp3 (75 aa).

At 1–2 the chain is on the lumenal side; it reads MR. The helical transmembrane segment at 3 to 23 threads the bilayer; that stretch reads VLDLILALITAAVVGYTIALV. Residues 24–75 are Cytoplasmic-facing; that stretch reads SNSGCYVHFDGRSATTTCPPGPWVESIANGLYTAGLARPHPEPECERRQSSW.

This sequence belongs to the Tymovirales TGBp3 protein family.

It localises to the host endoplasmic reticulum membrane. In terms of biological role, plays a role in viral cell-to-cell propagation, by facilitating genome transport to neighboring plant cells through plasmosdesmata. May induce the formation of granular vesicles derived from the Endoplasmic reticulum, which align on actin filaments. The protein is Movement protein TGBp3 of Strawberry mild yellow edge-associated virus (SMYEaV).